The primary structure comprises 411 residues: Argininosuccinate lyase (411 aa).

This sequence belongs to the lyase 1 family. Argininosuccinate lyase subfamily.

Its subcellular location is the cytoplasm. It carries out the reaction 2-(N(omega)-L-arginino)succinate = fumarate + L-arginine. It functions in the pathway amino-acid biosynthesis; L-arginine biosynthesis; L-arginine from L-ornithine and carbamoyl phosphate: step 3/3. The protein is Argininosuccinate lyase of Legionella pneumophila (strain Lens).